We begin with the raw amino-acid sequence, 89 residues long: Small ribosomal subunit protein uS19 (89 aa).

The protein belongs to the universal ribosomal protein uS19 family.

Functionally, protein S19 forms a complex with S13 that binds strongly to the 16S ribosomal RNA. In Ruthia magnifica subsp. Calyptogena magnifica, this protein is Small ribosomal subunit protein uS19.